The chain runs to 180 residues: Methionine-R-sulfoxide reductase B2, mitochondrial (180 aa).

Residues 1 to 41 (MSRFLVRLSTVVSKGATGKSVLPQKRIFAGIRLISSSTGLQ) constitute a mitochondrion transit peptide. A MsrB domain is found at 49–178 (STDWQRKLSP…NSVALNFKPR (130 aa)). Zn(2+)-binding residues include Cys88, Cys91, Cys144, and Cys147. Cys167 serves as the catalytic Nucleophile.

The protein belongs to the MsrB Met sulfoxide reductase family. The cofactor is Zn(2+).

Its subcellular location is the mitochondrion. It carries out the reaction L-methionyl-[protein] + [thioredoxin]-disulfide + H2O = L-methionyl-(R)-S-oxide-[protein] + [thioredoxin]-dithiol. The catalysed reaction is [thioredoxin]-disulfide + L-methionine + H2O = L-methionine (R)-S-oxide + [thioredoxin]-dithiol. In terms of biological role, methionine-sulfoxide reductase that specifically reduces methionine (R)-sulfoxide back to methionine. While in many cases, methionine oxidation is the result of random oxidation following oxidative stress, methionine oxidation is also a post-translational modification that takes place on specific residue. Upon oxidative stress, may play a role in the preservation of mitochondrial integrity by decreasing the intracellular reactive oxygen species build-up through its scavenging role, hence contributing to cell survival and protein maintenance. This chain is Methionine-R-sulfoxide reductase B2, mitochondrial (msrb2), found in Danio rerio (Zebrafish).